The primary structure comprises 450 residues: Glutamyl-tRNA(Gln) amidotransferase subunit A, mitochondrial (450 aa).

Catalysis depends on charge relay system residues Lys47 and Ser122. Ser146 serves as the catalytic Acyl-ester intermediate.

Belongs to the amidase family. GatA subfamily. As to quaternary structure, subunit of the heterotrimeric GatFAB amidotransferase (AdT) complex, composed of A, B and F subunits.

The protein resides in the mitochondrion. The enzyme catalyses L-glutamyl-tRNA(Gln) + L-glutamine + ATP + H2O = L-glutaminyl-tRNA(Gln) + L-glutamate + ADP + phosphate + H(+). Functionally, allows the formation of correctly charged Gln-tRNA(Gln) through the transamidation of misacylated Glu-tRNA(Gln) in the mitochondria. The reaction takes place in the presence of glutamine and ATP through an activated gamma-phospho-Glu-tRNA(Gln). This is Glutamyl-tRNA(Gln) amidotransferase subunit A, mitochondrial from Candida albicans (strain WO-1) (Yeast).